A 296-amino-acid chain; its full sequence is uncharacterized protein (296 aa).

The stretch at 129–170 (VKELKDLIRTVADEHMKMKREHEAAMKELTLLINNQKQQQQQ) forms a coiled coil. Positions 165–187 (KQQQQQPVPMPRNSTATRPKNLA) are disordered.

This is an uncharacterized protein from Ostreid herpesvirus 1 (isolate France) (OsHV-1).